The following is a 391-amino-acid chain: Succinate--CoA ligase [GDP-forming] subunit beta, mitochondrial (391 aa).

The region spanning 5 to 233 (KKIMADHGVT…NAEFRQKEIF (229 aa)) is the ATP-grasp domain. GTP is bound by residues Q16, 49 to 51 (GRG), and L105. N202 and D216 together coordinate Mg(2+). Residues N267 and 324-326 (GIV) each bind substrate.

Belongs to the succinate/malate CoA ligase beta subunit family. GTP-specific subunit beta subfamily. As to quaternary structure, heterodimer of an alpha and a beta subunit. The beta subunit determines specificity for GTP. Requires Mg(2+) as cofactor. In terms of tissue distribution, widely expressed. Not present in breast muscle.

It localises to the mitochondrion. It carries out the reaction GTP + succinate + CoA = succinyl-CoA + GDP + phosphate. The protein operates within carbohydrate metabolism; tricarboxylic acid cycle; succinate from succinyl-CoA (ligase route): step 1/1. GTP-specific succinyl-CoA synthetase functions in the citric acid cycle (TCA), coupling the hydrolysis of succinyl-CoA to the synthesis of GTP and thus represents the only step of substrate-level phosphorylation in the TCA. The beta subunit provides nucleotide specificity of the enzyme and binds the substrate succinate, while the binding sites for coenzyme A and phosphate are found in the alpha subunit. This chain is Succinate--CoA ligase [GDP-forming] subunit beta, mitochondrial, found in Columba livia (Rock dove).